The following is an 808-amino-acid chain: Tegument protein UL47 homolog (808 aa).

Disordered regions lie at residues 1–21 (MQMPSMHRYGHPGQNQRRENQ) and 77–266 (PNEE…SFGE). The segment covering 83 to 92 (DNSRGRDRTR) has biased composition (basic and acidic residues). Residues 133–160 (SRARSRRRSSSRRRHRNASMHMHFRGGS) are compositionally biased toward basic residues. Residues 162 to 171 (RSATGSQNLI) show a composition bias toward polar residues. The span at 197–214 (RSSRVRRRHRRSSRRRGP) shows a compositional bias: basic residues. Positions 235-259 (PISDIDQKRLRKNSDTSSRGTRESP) are enriched in basic and acidic residues.

Belongs to the alphaherpesvirinae HHV-1 UL47 family. As to quaternary structure, interacts with US3 kinase. Interacts with UL31 and UL34; these interactions seem important for efficient virion nuclear egress. Interacts with UL41/VHS. Phosphorylated by US3. This phosphorylation is required for proper nuclear localization. Post-translationally, O-glycosylated.

The protein resides in the virion tegument. It is found in the host nucleus. It localises to the host cytoplasm. Functionally, tegument protein that can bind to various RNA transcripts. Plays a role in the attenuation of selective viral and cellular mRNA degradation by modulating the activity of host shutoff RNase UL41/VHS. Also plays a role in the primary envelopment of virions in the perinuclear space, probably by interacting with two nuclear egress proteins UL31 and UL34. Plays an important role in the splicing of glycoprotein/gC transcripts and thereby participates in bird-to-bird viral transmission. This is Tegument protein UL47 homolog (MDV060) from Gallus gallus (Chicken).